Here is a 317-residue protein sequence, read N- to C-terminus: tRNA dimethylallyltransferase (317 aa).

14 to 21 (GPTAVGKT) is a binding site for ATP. 16 to 21 (TAVGKT) serves as a coordination point for substrate. The interval 39–42 (DSMQ) is interaction with substrate tRNA.

Belongs to the IPP transferase family. As to quaternary structure, monomer. The cofactor is Mg(2+).

The enzyme catalyses adenosine(37) in tRNA + dimethylallyl diphosphate = N(6)-dimethylallyladenosine(37) in tRNA + diphosphate. Catalyzes the transfer of a dimethylallyl group onto the adenine at position 37 in tRNAs that read codons beginning with uridine, leading to the formation of N6-(dimethylallyl)adenosine (i(6)A). This is tRNA dimethylallyltransferase from Bacillus cereus (strain ATCC 14579 / DSM 31 / CCUG 7414 / JCM 2152 / NBRC 15305 / NCIMB 9373 / NCTC 2599 / NRRL B-3711).